The chain runs to 896 residues: MSDNRLDTARHHSLFLARQLDNGKLKPEIFLPMLDKVLTEADFQAFADWDKIRAEENEEELARQLRELRRYVVSQIIVRDINRISDLNEVTRTITLFADFAVNTALDFAYAYYRDMYGTPIGRYTKSPQHLSVVAMGKAGGYELNVSSDIDLIFVYPESGDTDGRRERGNQEFFTKVGQKLIALLNDITADGQVFRVDMRLRPDGDSGALVLSETALEQYLITQGREWERYAWCKGRVVTPYPNGIKSLVRPFVFRKYLDYSAYEAMRKLHRQISSEVSKKGMADNIKLGAGGIREVEFIAQIFQMIRGGQMRALQLKGTQETLKKLAETGIMPSENVETLLAAYRFLRDVEHRLQYWDDQQTQTLPTSPEQRQLLAESMGFDSYSAFSDGLNIHRNKVNQLFNEILSEPEEQTQDNSEWQWAWQEKPDEEERLGRLKEYGFDAETIATRLDQIRNGHKYRHLSAHAQPRFDAIVPLFVQAAAEQNNPTDTLMRLLDFLENISRRSAYLAFLNEHPQTLAQLAQIMGQSSWVAAYLNKYPILLDELISAQLLDTAFDWQALAAALSDDLKACGGDTEAQMDTLRRFQHAQVFRLAVQDLAGLWTVESLSDQLSALADTILAAALLCAWADMPKKHRDTPQFAIVGYGKLGGKELGYASDLDLVYLYDDPHPDAGDVYSRLARRLTNWLSTATGAGSLYETDLRLRPNGDAGFLAHSIAAFEKYQRENAWTWEHQSLTRARFICGTPEIQTAFDRIRTEILTAERDQTALSGEIIEMREKMFPTHPPADSNVKYARGGVVDVEFIVQYLILAHARQYPQLLDNYGNIALLNIAADCGLIDKTLAGQSRTAYRFYRRQQHNTKLRDAKKTEVTGELLAHYGNVRKLWREVFGEEAATA.

Residues 1-411 are adenylyl removase; sequence MSDNRLDTAR…LFNEILSEPE (411 aa). Positions 417–896 are adenylyl transferase; sequence NSEWQWAWQE…EVFGEEAATA (480 aa).

This sequence belongs to the GlnE family. Mg(2+) is required as a cofactor.

The enzyme catalyses [glutamine synthetase]-O(4)-(5'-adenylyl)-L-tyrosine + phosphate = [glutamine synthetase]-L-tyrosine + ADP. The catalysed reaction is [glutamine synthetase]-L-tyrosine + ATP = [glutamine synthetase]-O(4)-(5'-adenylyl)-L-tyrosine + diphosphate. Functionally, involved in the regulation of glutamine synthetase GlnA, a key enzyme in the process to assimilate ammonia. When cellular nitrogen levels are high, the C-terminal adenylyl transferase (AT) inactivates GlnA by covalent transfer of an adenylyl group from ATP to specific tyrosine residue of GlnA, thus reducing its activity. Conversely, when nitrogen levels are low, the N-terminal adenylyl removase (AR) activates GlnA by removing the adenylyl group by phosphorolysis, increasing its activity. The regulatory region of GlnE binds the signal transduction protein PII (GlnB) which indicates the nitrogen status of the cell. This is Bifunctional glutamine synthetase adenylyltransferase/adenylyl-removing enzyme from Neisseria meningitidis serogroup A / serotype 4A (strain DSM 15465 / Z2491).